The primary structure comprises 186 residues: ATP-dependent protease subunit HslV (186 aa).

Threonine 14 is an active-site residue. Positions 168, 171, and 174 each coordinate Na(+).

The protein belongs to the peptidase T1B family. HslV subfamily. As to quaternary structure, a double ring-shaped homohexamer of HslV is capped on each side by a ring-shaped HslU homohexamer. The assembly of the HslU/HslV complex is dependent on binding of ATP.

It is found in the cytoplasm. The catalysed reaction is ATP-dependent cleavage of peptide bonds with broad specificity.. With respect to regulation, allosterically activated by HslU binding. Functionally, protease subunit of a proteasome-like degradation complex believed to be a general protein degrading machinery. This is ATP-dependent protease subunit HslV from Bradyrhizobium diazoefficiens (strain JCM 10833 / BCRC 13528 / IAM 13628 / NBRC 14792 / USDA 110).